A 285-amino-acid chain; its full sequence is Bifunctional protein FolD (285 aa).

Residues glycine 165–serine 167, serine 190, and isoleucine 231 each bind NADP(+).

It belongs to the tetrahydrofolate dehydrogenase/cyclohydrolase family. Homodimer.

It catalyses the reaction (6R)-5,10-methylene-5,6,7,8-tetrahydrofolate + NADP(+) = (6R)-5,10-methenyltetrahydrofolate + NADPH. It carries out the reaction (6R)-5,10-methenyltetrahydrofolate + H2O = (6R)-10-formyltetrahydrofolate + H(+). Its pathway is one-carbon metabolism; tetrahydrofolate interconversion. Catalyzes the oxidation of 5,10-methylenetetrahydrofolate to 5,10-methenyltetrahydrofolate and then the hydrolysis of 5,10-methenyltetrahydrofolate to 10-formyltetrahydrofolate. The sequence is that of Bifunctional protein FolD from Acetivibrio thermocellus (strain ATCC 27405 / DSM 1237 / JCM 9322 / NBRC 103400 / NCIMB 10682 / NRRL B-4536 / VPI 7372) (Clostridium thermocellum).